The primary structure comprises 172 residues: Small ribosomal subunit protein uS5 (172 aa).

The S5 DRBM domain maps to 17–80 (MREKMIAVNR…EEARRKMIKV (64 aa)).

This sequence belongs to the universal ribosomal protein uS5 family. Part of the 30S ribosomal subunit. Contacts proteins S4 and S8.

Functionally, with S4 and S12 plays an important role in translational accuracy. In terms of biological role, located at the back of the 30S subunit body where it stabilizes the conformation of the head with respect to the body. This Janthinobacterium sp. (strain Marseille) (Minibacterium massiliensis) protein is Small ribosomal subunit protein uS5.